Here is a 270-residue protein sequence, read N- to C-terminus: Alpha N-terminal protein methyltransferase 1 (270 aa).

Residues Gly-114, Arg-119, Glu-137–Asn-139, Leu-165–Gln-166, and Gln-180 contribute to the S-adenosyl-L-methionine site.

It belongs to the methyltransferase superfamily. NTM1 family.

The enzyme catalyses N-terminal L-alanyl-L-prolyl-L-lysyl-[protein] + 3 S-adenosyl-L-methionine = N-terminal N,N,N-trimethyl-L-alanyl-L-prolyl-L-lysyl-[protein] + 3 S-adenosyl-L-homocysteine + 3 H(+). It carries out the reaction N-terminal L-seryl-L-prolyl-L-lysyl-[protein] + 3 S-adenosyl-L-methionine = N-terminal N,N,N-trimethyl-L-seryl-L-prolyl-L-lysyl-[protein] + 3 S-adenosyl-L-homocysteine + 3 H(+). It catalyses the reaction N-terminal L-prolyl-L-prolyl-L-lysyl-[protein] + 2 S-adenosyl-L-methionine = N-terminal N,N-dimethyl-L-prolyl-L-prolyl-L-lysyl-[protein] + 2 S-adenosyl-L-homocysteine + 2 H(+). Its function is as follows. Alpha-N-methyltransferase that methylates the N-terminus of target proteins containing the N-terminal motif [Ala/Pro/Ser]-Pro-Lys when the initiator Met is cleaved. Specifically catalyzes mono-, di- or tri-methylation of exposed alpha-amino group of Ala or Ser residue in the [Ala/Ser]-Pro-Lys motif and mono- or di-methylation of Pro in the Pro-Pro-Lys motif. This is Alpha N-terminal protein methyltransferase 1 from Dictyostelium discoideum (Social amoeba).